A 367-amino-acid polypeptide reads, in one-letter code: Queuine tRNA-ribosyltransferase (367 aa).

The active-site Proton acceptor is aspartate 92. Residues 92–96, aspartate 146, glutamine 188, and glycine 215 contribute to the substrate site; that span reads DSGGF. The segment at 246-252 is RNA binding; it reads GVGTPKD. The Nucleophile role is filled by aspartate 265. Positions 303, 305, 308, and 334 each coordinate Zn(2+).

The protein belongs to the queuine tRNA-ribosyltransferase family. Homodimer. Within each dimer, one monomer is responsible for RNA recognition and catalysis, while the other monomer binds to the replacement base PreQ1. The cofactor is Zn(2+).

It carries out the reaction 7-aminomethyl-7-carbaguanine + guanosine(34) in tRNA = 7-aminomethyl-7-carbaguanosine(34) in tRNA + guanine. The protein operates within tRNA modification; tRNA-queuosine biosynthesis. In terms of biological role, catalyzes the base-exchange of a guanine (G) residue with the queuine precursor 7-aminomethyl-7-deazaguanine (PreQ1) at position 34 (anticodon wobble position) in tRNAs with GU(N) anticodons (tRNA-Asp, -Asn, -His and -Tyr). Catalysis occurs through a double-displacement mechanism. The nucleophile active site attacks the C1' of nucleotide 34 to detach the guanine base from the RNA, forming a covalent enzyme-RNA intermediate. The proton acceptor active site deprotonates the incoming PreQ1, allowing a nucleophilic attack on the C1' of the ribose to form the product. After dissociation, two additional enzymatic reactions on the tRNA convert PreQ1 to queuine (Q), resulting in the hypermodified nucleoside queuosine (7-(((4,5-cis-dihydroxy-2-cyclopenten-1-yl)amino)methyl)-7-deazaguanosine). The chain is Queuine tRNA-ribosyltransferase from Francisella tularensis subsp. holarctica (strain FTNF002-00 / FTA).